The chain runs to 627 residues: Chaperone protein DnaK (627 aa).

T197 is modified (phosphothreonine; by autocatalysis). A compositionally biased stretch (polar residues) spans 602–611 (ENQHSEANTV). The disordered stretch occupies residues 602 to 627 (ENQHSEANTVNDEKVVDADFQDVDKK). Residues 612–627 (NDEKVVDADFQDVDKK) show a composition bias toward basic and acidic residues.

The protein belongs to the heat shock protein 70 family.

Functionally, acts as a chaperone. The protein is Chaperone protein DnaK of Rickettsia felis (strain ATCC VR-1525 / URRWXCal2) (Rickettsia azadi).